The following is a 1748-amino-acid chain: Flagellar attachment zone protein 1 (1748 aa).

Coiled-coil stretches lie at residues 613–657 (REQE…KLQK), 684–864 (VTLD…HKVR), and 903–1663 (NDHM…SALE). A run of 41 repeats spans residues 1012–1025 (EELELKAAENEKLA), 1026–1039 (EELELKAAENEKLA), 1040–1053 (EELELKAAENEKLA), 1054–1067 (EALDLKAAENEKLA), 1068–1081 (EELELKVAENEKLA), 1082–1095 (EELELKVAENEKLA), 1096–1109 (EELELKAAENEKLA), 1110–1123 (EELELKAAENEKLA), 1124–1137 (EELELKAAENEKLA), 1138–1151 (EELELKAAENEKLA), 1152–1165 (EALDLKAAENEKLA), 1166–1179 (EELDLKAAENEKLA), 1180–1193 (EELELKVAENEKLA), 1194–1207 (EELELKAAENEKLA), 1208–1221 (EELELKAAENEKLA), 1222–1235 (EELELKAAENEKLA), 1236–1249 (EELELKVAENEKLA), 1250–1263 (EELELKAAENEKLA), 1264–1277 (EELELKAAENEKLA), 1278–1291 (EELELKAAENEKLA), 1292–1305 (EELELKVAENEKLA), 1306–1319 (EELELKAAENEKLA), 1320–1333 (EELELKAAENEKLA), 1334–1347 (EELELKAAENEKLA), 1348–1361 (EELELKAAENEKLA), 1362–1375 (EELELKAAENEKLA), 1376–1389 (EELELKAAENEKLA), 1390–1403 (EELELKAAENEKLA), 1404–1417 (EELELKAAENEKLA), 1418–1431 (EELELKAAENEKLA), 1432–1445 (EELELKAAENEKLA), 1446–1459 (EELELKAAENEKLA), 1460–1473 (EELELKAAENEKLA), 1474–1487 (EELELKAAENEKLA), 1488–1501 (EELELKAAENEKLA), 1502–1515 (EELELKAAENEKLA), 1516–1529 (EELELKAAENEKLA), 1530–1543 (EELELKAAENEKLA), 1544–1557 (EELELKVAENEKLA), 1558–1571 (EELELKVAENEKLA), and 1572–1585 (EELELKVAENKRLA). The 41 X 14 AA tandem repeats of E-E-L-E-L-K-[VA]-A-E-N-E-K-L-A stretch occupies residues 1012 to 1529 (EELELKAAEN…LKAAENEKLA (518 aa)).

It is found in the cell projection. Its subcellular location is the cilium. It localises to the flagellum. A component of FAZ filament that is required for correct FAZ assembly and attachment. Not essential for new flagellum growth. The sequence is that of Flagellar attachment zone protein 1 from Trypanosoma brucei gambiense (strain MHOM/CI/86/DAL972).